Consider the following 306-residue polypeptide: Putative HTH-type transcriptional regulatory protein Mhun_2548 (306 aa).

The HTH cro/C1-type domain occupies 132-189 (LRELRETRSLSLGDLGQILGVSRRTVAKYEAGMGTTIEIALRIEETFDSGVIEPIDLI). The segment at residues 143–162 (LGDLGQILGVSRRTVAKYEA) is a DNA-binding region (H-T-H motif).

The chain is Putative HTH-type transcriptional regulatory protein Mhun_2548 from Methanospirillum hungatei JF-1 (strain ATCC 27890 / DSM 864 / NBRC 100397 / JF-1).